Reading from the N-terminus, the 37-residue chain is Large ribosomal subunit protein bL36c (37 aa).

The protein belongs to the bacterial ribosomal protein bL36 family.

It localises to the plastid. The protein localises to the chloroplast. The sequence is that of Large ribosomal subunit protein bL36c from Populus alba (White poplar).